A 301-amino-acid polypeptide reads, in one-letter code: Lysozyme-like protein 3 (301 aa).

The first 15 residues, 1-15 (MKLFALLVSITLCYS), serve as a signal peptide directing secretion. In terms of domain architecture, Ch-type lysozyme spans 64–282 (HAYSVDISFH…HLSQIVHFST (219 aa)).

Belongs to the glycosyl hydrolase 25 family.

Plays a role in the stress response to heavy metals such as copper, probably in a kgb-1-dependent manner. This chain is Lysozyme-like protein 3, found in Caenorhabditis elegans.